Here is a 225-residue protein sequence, read N- to C-terminus: MGIRAIVVDTAGTTTDLNFIKDTLFTYSAKALPDFLKENETNVLVDNCICDVRDIALEPDASLERVVEILQQWVEEDRKATPLKTLQGLIWKQGYARGEFTGHIFPDFIDTIESIKQQNIRIYSFSSGSAEAQKLLFSHSDGGDLTPHFDGHFDTRTGNKLFKQAYCNIINTISLAPKQVLFISDVIEELKAAEEAGMRTLQMVRSADQRTGNFKQIASFKELTF.

It belongs to the HAD-like hydrolase superfamily. MasA/MtnC family. Monomer. Mg(2+) serves as cofactor.

The enzyme catalyses 5-methylsulfanyl-2,3-dioxopentyl phosphate + H2O = 1,2-dihydroxy-5-(methylsulfanyl)pent-1-en-3-one + phosphate. It functions in the pathway amino-acid biosynthesis; L-methionine biosynthesis via salvage pathway; L-methionine from S-methyl-5-thio-alpha-D-ribose 1-phosphate: step 3/6. The protein operates within amino-acid biosynthesis; L-methionine biosynthesis via salvage pathway; L-methionine from S-methyl-5-thio-alpha-D-ribose 1-phosphate: step 4/6. Functionally, bifunctional enzyme that catalyzes the enolization of 2,3-diketo-5-methylthiopentyl-1-phosphate (DK-MTP-1-P) into the intermediate 2-hydroxy-3-keto-5-methylthiopentenyl-1-phosphate (HK-MTPenyl-1-P), which is then dephosphorylated to form the acireductone 1,2-dihydroxy-3-keto-5-methylthiopentene (DHK-MTPene). This is Enolase-phosphatase E1 from Shewanella woodyi (strain ATCC 51908 / MS32).